A 352-amino-acid polypeptide reads, in one-letter code: Ribosomal RNA large subunit methyltransferase M (352 aa).

S-adenosyl-L-methionine is bound by residues Ser184, 217 to 220 (APGG), Asp236, Asp256, and Asp272. Catalysis depends on Lys301, which acts as the Proton acceptor.

This sequence belongs to the class I-like SAM-binding methyltransferase superfamily. RNA methyltransferase RlmE family. RlmM subfamily. As to quaternary structure, monomer.

The protein resides in the cytoplasm. It catalyses the reaction cytidine(2498) in 23S rRNA + S-adenosyl-L-methionine = 2'-O-methylcytidine(2498) in 23S rRNA + S-adenosyl-L-homocysteine + H(+). Functionally, catalyzes the 2'-O-methylation at nucleotide C2498 in 23S rRNA. In Pseudomonas paraeruginosa (strain DSM 24068 / PA7) (Pseudomonas aeruginosa (strain PA7)), this protein is Ribosomal RNA large subunit methyltransferase M.